Reading from the N-terminus, the 431-residue chain is 5-methylthioadenosine/S-adenosylhomocysteine deaminase (431 aa).

The Zn(2+) site is built by His-66 and His-68. Substrate is bound by residues Glu-95, Arg-147, and His-185. His-212 contributes to the Zn(2+) binding site. Positions 215 and 300 each coordinate substrate. Asp-300 contributes to the Zn(2+) binding site.

The protein belongs to the metallo-dependent hydrolases superfamily. MTA/SAH deaminase family. Requires Zn(2+) as cofactor.

It carries out the reaction S-adenosyl-L-homocysteine + H2O + H(+) = S-inosyl-L-homocysteine + NH4(+). The enzyme catalyses S-methyl-5'-thioadenosine + H2O + H(+) = S-methyl-5'-thioinosine + NH4(+). Functionally, catalyzes the deamination of 5-methylthioadenosine and S-adenosyl-L-homocysteine into 5-methylthioinosine and S-inosyl-L-homocysteine, respectively. Is also able to deaminate adenosine. The sequence is that of 5-methylthioadenosine/S-adenosylhomocysteine deaminase from Desulfitobacterium hafniense (strain Y51).